Consider the following 118-residue polypeptide: Class II hydrophobin CRP (118 aa).

Positions Met-1–Arg-22 are cleaved as a signal peptide. A disordered region spans residues Ala-20–Thr-46. Residues Arg-22–Ser-45 show a composition bias toward gly residues. 7 repeat units span residues Ser-29–Gly-30, Ser-31–Gly-32, Ser-33–Gly-34, Ser-35–Gly-36, Ser-37–Gly-38, Ser-39–Gly-40, and Ser-41–Gly-42. The interval Ser-29–Gly-42 is 7 X 2 AA tandem repeats of S-G. Cystine bridges form between Cys-51/Cys-100, Cys-61/Cys-91, Cys-62/Cys-74, and Cys-101/Cys-112.

This sequence belongs to the cerato-ulmin hydrophobin family. In terms of assembly, homotetramer. Further self-assembles to form highly ordered films at water-air interfaces through intermolecular interactions.

It localises to the secreted. The protein resides in the cell wall. In terms of biological role, aerial growth, conidiation, and dispersal of filamentous fungi in the environment rely upon a capability of their secreting small amphipathic proteins called hydrophobins (HPBs) with low sequence identity. Class I can self-assemble into an outermost layer of rodlet bundles on aerial cell surfaces, conferring cellular hydrophobicity that supports fungal growth, development and dispersal; whereas Class II form highly ordered films at water-air interfaces through intermolecular interactions but contribute nothing to the rodlet structure. Cryparin is a class II hydrophobin that is the most abundant protein produced by this fungus when grown in liquid culture and that plays an essential role in the fitness of this important plant pathogen by facilitating the eruption of the fungal fruiting bodies through the bark of its host tree. The chain is Class II hydrophobin CRP from Cryphonectria parasitica (Chestnut blight fungus).